The primary structure comprises 238 residues: Ribonuclease PH (238 aa).

Phosphate is bound by residues R86 and 124-126 (GTR).

The protein belongs to the RNase PH family. In terms of assembly, homohexameric ring arranged as a trimer of dimers.

The catalysed reaction is tRNA(n+1) + phosphate = tRNA(n) + a ribonucleoside 5'-diphosphate. Its function is as follows. Phosphorolytic 3'-5' exoribonuclease that plays an important role in tRNA 3'-end maturation. Removes nucleotide residues following the 3'-CCA terminus of tRNAs; can also add nucleotides to the ends of RNA molecules by using nucleoside diphosphates as substrates, but this may not be physiologically important. Probably plays a role in initiation of 16S rRNA degradation (leading to ribosome degradation) during starvation. This Vibrio cholerae serotype O1 (strain ATCC 39315 / El Tor Inaba N16961) protein is Ribonuclease PH.